Here is an 873-residue protein sequence, read N- to C-terminus: MRFGWLEVAALTAASVANAQVFDNSHGNNQELAFSPPFYPSPWADGQGEWADAHRRAVEIVSQMTLAEKVNLTTGTGWEMDRCVGQTGSVPRLGINWGLCGQDSPLGIRFSDLNSAFPAGTNVAATWDKTLAYLRGKAMGEEFNDKGVDILLGPAAGPLGKYPDGGRIWEGFSPDPALTGVLFAETIKGIQDAGVIATAKHYILNEQEHFRQVGEAQGYGYNITETISSNVDDKTMHELYLWPFADAVRAGVGAVMCSYNQINNSYGCQNSQTLNKLLKAELGFQGFVMSDWSAHHSGVGAALAGLDMSMPGDISFDDGLSFWGTNLTVSVLNGTVPAWRVDDMAVRIMTAYYKVGRDRLRIPPNFSSWTRDEYGWEHSAVSEGAWTKVNDFVNVQRSHSQIIREIGAASTVLLKNTGALPLTGKEVKVGVLGEDAGSNPWGANGCPDRGCDNGTLAMAWGSGTANFPYLVTPEQAIQREVISNGGNVFAVTDNGALSQMADVASQSSVSLVFVNADSGEGFISVDGNEGDRKNLTLWKNGEAVIDTVVSHCNNTIVVIHSVGPVLIDRWYDNPNVTAIIWAGLPGQESGNSLVDVLYGRVNPSAKTPFTWGKTRESYGAPLLTEPNNGNGAPQDDFNEGVFIDYRHFDKRNETPIYEFGHGLSYTTFGYSHLRVQALNSSSSAYVPTSGETKPAPTYGEIGSAADYLYPEGLKRITKFIYPWLNSTDLEDSSDDPNYGWQDSEYIPEGARDGSPQPLLKAGGAPGGNPTLYQDLVRVSATITNTGNVAGYEVPQLYVSLGGPNEPRVVLRKFDRIFLAPGEQKVWTTTLNRRDLANWDVEAQDWVITKYPKKVHVGSSSRKLPLRAPLPRVY.

The signal sequence occupies residues 1-19; it reads MRFGWLEVAALTAASVANA. Residues N71, N222, and N263 are each glycosylated (N-linked (GlcNAc...) asparagine). D291 is a catalytic residue. 9 N-linked (GlcNAc...) asparagine glycosylation sites follow: N326, N333, N365, N453, N534, N553, N575, N679, and N725. Positions 731-764 are disordered; sequence DSSDDPNYGWQDSEYIPEGARDGSPQPLLKAGGA.

This sequence belongs to the glycosyl hydrolase 3 family.

It is found in the secreted. The catalysed reaction is Hydrolysis of terminal, non-reducing beta-D-glucosyl residues with release of beta-D-glucose.. The protein operates within glycan metabolism; cellulose degradation. Functionally, beta-glucosidases are one of a number of cellulolytic enzymes involved in the degradation of cellulosic biomass. Catalyzes the last step releasing glucose from the inhibitory cellobiose. The sequence is that of Probable beta-glucosidase A (bglA) from Aspergillus fumigatus (strain ATCC MYA-4609 / CBS 101355 / FGSC A1100 / Af293) (Neosartorya fumigata).